We begin with the raw amino-acid sequence, 1249 residues long: Clustered mitochondria protein homolog (1249 aa).

Positions 1 to 34 are disordered; it reads MAQTNGELEHSKAETPEQLTNGNHPEETQEEEQN. The Clu domain occupies 321–565; it reads DITRSQENYL…RVTPLDVMWQ (245 aa). Disordered stretches follow at residues 610–638 and 874–907; these read VETA…EALD and VPAT…PEKP. Basic and acidic residues predominate over residues 613–638; it reads ASKEKSEENAESKEEGSEEKSEEALD. TPR repeat units lie at residues 975–1008, 1017–1050, and 1059–1092; these read AKLY…TERT, ILSY…WKII, and ITTM…CESL. The segment covering 1178 to 1191 has biased composition (polar residues); that stretch reads TRTLGTKVQPQVGQ. Residues 1178–1249 form a disordered region; sequence TRTLGTKVQP…KLRGSKKSSA (72 aa). Residues 1192-1205 are compositionally biased toward low complexity; sequence SAPSASGASSANPS.

It belongs to the CLU family. In terms of assembly, may associate with the eukaryotic translation initiation factor 3 (eIF-3) complex.

It is found in the cytoplasm. Functionally, mRNA-binding protein involved in proper cytoplasmic distribution of mitochondria. This is Clustered mitochondria protein homolog from Aspergillus oryzae (strain ATCC 42149 / RIB 40) (Yellow koji mold).